A 231-amino-acid chain; its full sequence is NifU-like protein 1, chloroplastic (231 aa).

The transit peptide at 1–69 (MMASLATSIS…SSQGEKISPL (69 aa)) directs the protein to the chloroplast.

This sequence belongs to the NifU family. Homodimer; disulfide-linked. In terms of tissue distribution, predominantly expressed in floral stalks and siliques. Expressed in leaves, cauline leaves, flower stalks and flowers (at protein level).

The protein resides in the plastid. It localises to the chloroplast stroma. In terms of biological role, molecular scaffold for [Fe-S] cluster assembly of chloroplastic iron-sulfur proteins. The sequence is that of NifU-like protein 1, chloroplastic (NIFU1) from Arabidopsis thaliana (Mouse-ear cress).